Consider the following 432-residue polypeptide: Trigger factor (432 aa).

One can recognise a PPIase FKBP-type domain in the interval 161 to 246 (EDRVTIDFTG…LKKVEERELP (86 aa)).

It belongs to the FKBP-type PPIase family. Tig subfamily.

Its subcellular location is the cytoplasm. It catalyses the reaction [protein]-peptidylproline (omega=180) = [protein]-peptidylproline (omega=0). Involved in protein export. Acts as a chaperone by maintaining the newly synthesized protein in an open conformation. Functions as a peptidyl-prolyl cis-trans isomerase. This is Trigger factor from Salmonella schwarzengrund (strain CVM19633).